The sequence spans 219 residues: Claudin-6 (219 aa).

Residues 1 to 7 are Cytoplasmic-facing; that stretch reads MASTGLQ. Residues 8-28 traverse the membrane as a helical segment; it reads ILGIVLTLLGWVNALVSCALP. Residues 29 to 81 are Extracellular-facing; it reads MWKVTAFIGNSIVVAQMVWEGLWMSCVVQSTGQMQCKVYDSLLALPQDLQAAR. Residues 82 to 102 traverse the membrane as a helical segment; that stretch reads ALCVVTLLIVLLGLLVYLAGA. Topologically, residues 103–116 are cytoplasmic; that stretch reads KCTTCVEDRNSKSR. Residues 117 to 137 form a helical membrane-spanning segment; sequence LVLISGIIFVISGVLTLIPVC. Over 138–163 the chain is Extracellular; the sequence is WTAHSIIQDFYNPLVADAQKRELGAS. The chain crosses the membrane as a helical span at residues 164–184; it reads LYLGWAASGLLLLGGGLLCCA. At 185–219 the chain is on the cytoplasmic side; the sequence is CSSGGTQGPRHYMACYSTSVPHSRGPSEYPTKNYV. A phosphoserine mark is found at serine 201, serine 203, serine 207, and serine 211. The interval 218–219 is interactions with TJP1, TJP2 and TJP3; that stretch reads YV.

The protein belongs to the claudin family. In terms of assembly, directly interacts with TJP1/ZO-1, TJP2/ZO-2 and TJP3/ZO-3. Interacts with CLDN1, CD81 and OCLN. In terms of tissue distribution, expressed mostly in embryonic tissues.

The protein resides in the cell junction. Its subcellular location is the tight junction. It localises to the cell membrane. In terms of biological role, plays a major role in tight junction-specific obliteration of the intercellular space, through calcium-independent cell-adhesion activity. The protein is Claudin-6 (Cldn6) of Mus musculus (Mouse).